Reading from the N-terminus, the 337-residue chain is 6-phosphogluconolactonase (337 aa).

It belongs to the cycloisomerase 2 family.

The enzyme catalyses 6-phospho-D-glucono-1,5-lactone + H2O = 6-phospho-D-gluconate + H(+). It functions in the pathway carbohydrate degradation; pentose phosphate pathway; D-ribulose 5-phosphate from D-glucose 6-phosphate (oxidative stage): step 2/3. Its function is as follows. Catalyzes the hydrolysis of 6-phosphogluconolactone to 6-phosphogluconate. The polypeptide is 6-phosphogluconolactonase (Blochmanniella pennsylvanica (strain BPEN)).